The primary structure comprises 140 residues: Ctenidin-1 (140 aa).

An N-terminal signal peptide occupies residues 1-19 (MKHLIPLIVMASVVLAVYA). Gly-138 bears the Glycine amide mark.

The protein belongs to the glycine-rich peptide family. Expressed in hemocytes (at protein level).

Its subcellular location is the secreted. Functionally, antimicrobial protein with bacteriostatic activity against the Gram-negative bacterium E.coli, and very weak activity against the Gram-positive bacterium S.aureus. Lacks activity against the yeast C.albicans. In Cupiennius salei (American wandering spider), this protein is Ctenidin-1.